Here is a 292-residue protein sequence, read N- to C-terminus: ATP synthase gamma chain (292 aa).

It belongs to the ATPase gamma chain family. As to quaternary structure, F-type ATPases have 2 components, CF(1) - the catalytic core - and CF(0) - the membrane proton channel. CF(1) has five subunits: alpha(3), beta(3), gamma(1), delta(1), epsilon(1). CF(0) has three main subunits: a, b and c.

It localises to the cell inner membrane. Produces ATP from ADP in the presence of a proton gradient across the membrane. The gamma chain is believed to be important in regulating ATPase activity and the flow of protons through the CF(0) complex. This Brucella ovis (strain ATCC 25840 / 63/290 / NCTC 10512) protein is ATP synthase gamma chain.